Consider the following 574-residue polypeptide: DNA-directed primase/polymerase protein (574 aa).

A coiled-coil region spans residues 2-22 (KRKWEERVKKVEELASYYERN). Substrate contacts are provided by residues Arg-76, 116–118 (DLE), 167–171 (KFSRH), 291–294 (RNFR), and Lys-300. 2 residues coordinate Mn(2+): Asp-116 and Glu-118. Cys-424, His-431, Cys-451, and Cys-456 together coordinate Zn(2+). Residues 424 to 457 (CENIGRAHRSNNIMILVDLKKEVWYQKCHDPVCR) carry the Zinc knuckle motif motif.

Belongs to the eukaryotic-type primase small subunit family. Mn(2+) is required as a cofactor.

Its subcellular location is the nucleus. The protein resides in the mitochondrion matrix. It is found in the chromosome. It carries out the reaction ssDNA + n NTP = ssDNA/pppN(pN)n-1 hybrid + (n-1) diphosphate.. The catalysed reaction is DNA(n) + a 2'-deoxyribonucleoside 5'-triphosphate = DNA(n+1) + diphosphate. Its function is as follows. DNA primase and DNA polymerase required to tolerate replication-stalling lesions by bypassing them. Required to facilitate mitochondrial and nuclear replication fork progression by initiating de novo DNA synthesis using dNTPs and acting as an error-prone DNA polymerase able to bypass certain DNA lesions. Shows a high capacity to tolerate DNA damage lesions such as 8oxoG and abasic sites in DNA. Provides different translesion synthesis alternatives when DNA replication is stalled: able to synthesize DNA primers downstream of lesions, such as UV lesions, R-loops and G-quadruplexes, to allow DNA replication to continue. Can also realign primers ahead of 'unreadable lesions' such as abasic sites and 6-4 photoproduct (6-4 pyrimidine-pyrimidinone), thereby skipping the lesion. Repriming avoids fork degradation while leading to accumulation of internal ssDNA gaps behind the forks. Also able to incorporate nucleotides opposite DNA lesions such as 8oxoG, like a regular translesion synthesis DNA polymerase. Also required for reinitiating stalled forks after ultraviolet (UV) damage during nuclear DNA replication. Required for mitochondrial DNA (mtDNA) synthesis and replication, by reinitiating synthesis after UV damage or in the presence of chain-terminating nucleotides. In addition to its role in DNA damage response, also required to maintain efficient nuclear and mitochondrial DNA replication in unperturbed cells. The sequence is that of DNA-directed primase/polymerase protein from Gallus gallus (Chicken).